A 144-amino-acid chain; its full sequence is Large ribosomal subunit protein uL14 (144 aa).

The protein belongs to the universal ribosomal protein uL14 family. Part of the 50S ribosomal subunit. Forms a cluster with proteins L3 and L24e, part of which may contact the 16S rRNA in 2 intersubunit bridges.

Functionally, binds to 23S rRNA. Forms part of two intersubunit bridges in the 70S ribosome. This chain is Large ribosomal subunit protein uL14, found in Caldivirga maquilingensis (strain ATCC 700844 / DSM 13496 / JCM 10307 / IC-167).